A 585-amino-acid polypeptide reads, in one-letter code: Protein NRT1/ PTR FAMILY 4.6 (585 aa).

The next 12 helical transmembrane spans lie at 28–48 (GMLA…AYLA), 75–95 (FMGT…AFFS), 96–116 (TFQI…ILTI), 142–162 (AMLF…KGSL), 184–204 (FFNY…TFVV), 211–231 (GWEW…LIFL), 343–363 (IVLK…CLAQ), 391–411 (IFPV…IIPF), 428–448 (IGVG…VEIK), 465–485 (LPVT…ADLF), 508–528 (SLSW…VSIV), and 554–574 (FYWL…FWAM).

It belongs to the major facilitator superfamily. Proton-dependent oligopeptide transporter (POT/PTR) (TC 2.A.17) family. In terms of tissue distribution, expressed in root hairs and in epidermis of both root tips and mature regions of roots. Detected in shoots, stems, flowers, siliques and imbibed seeds. Expressed in vascular tissues in cotyledons, trus leaves, hypocotyls, roots and inflorescence stems.

It localises to the cell membrane. Its function is as follows. Low-affinity proton-dependent nitrate transporter. Involved in constitutive nitrate uptake. Not involved in histidine or dipeptides transport. Involved in (+)-abscisic acid (ABA) transport, but not in gibberellin, indole-3-acetic acid or jasmonic acid import. Mediates cellular ABA uptake. Nitrate does not compete with abscisic acid as a substrate of NPF4.6. The chain is Protein NRT1/ PTR FAMILY 4.6 (NPF4.6) from Arabidopsis thaliana (Mouse-ear cress).